The primary structure comprises 120 residues: Crustacean hyperglycemic hormones 2 (120 aa).

Residues 1-27 (MIAFHMVWSALLASLLLLLLAPSASPV) form the signal peptide. 3 cysteine pairs are disulfide-bonded: Cys-53–Cys-89, Cys-69–Cys-85, and Cys-72–Cys-98. Val-118 carries the post-translational modification Valine amide.

The protein belongs to the arthropod CHH/MIH/GIH/VIH hormone family.

The protein localises to the secreted. Hormone found in the sinus gland of isopods and decapods which controls the blood sugar level. Has a secretagogue action over the amylase released from the midgut gland. May act as a stress hormone and may be involved in the control of molting and reproduction. The polypeptide is Crustacean hyperglycemic hormones 2 (Penaeus japonicus (Kuruma prawn)).